Reading from the N-terminus, the 452-residue chain is tRNA modification GTPase MnmE (452 aa).

Residues Arg21, Glu78, and Lys118 each coordinate (6S)-5-formyl-5,6,7,8-tetrahydrofolate. The region spanning 214 to 375 is the TrmE-type G domain; it reads GMKVVIAGRP…LREHLKQSMG (162 aa). Asn224 lines the K(+) pocket. GTP is bound by residues 224-229, 243-249, and 268-271; these read NAGKSS, TDIAGTT, and DTAG. Ser228 is a binding site for Mg(2+). Residues Thr243, Ile245, and Thr248 each coordinate K(+). Thr249 provides a ligand contact to Mg(2+). Lys452 is a (6S)-5-formyl-5,6,7,8-tetrahydrofolate binding site.

It belongs to the TRAFAC class TrmE-Era-EngA-EngB-Septin-like GTPase superfamily. TrmE GTPase family. As to quaternary structure, homodimer. Heterotetramer of two MnmE and two MnmG subunits. K(+) serves as cofactor.

The protein resides in the cytoplasm. In terms of biological role, exhibits a very high intrinsic GTPase hydrolysis rate. Involved in the addition of a carboxymethylaminomethyl (cmnm) group at the wobble position (U34) of certain tRNAs, forming tRNA-cmnm(5)s(2)U34. The sequence is that of tRNA modification GTPase MnmE from Actinobacillus succinogenes (strain ATCC 55618 / DSM 22257 / CCUG 43843 / 130Z).